A 62-amino-acid polypeptide reads, in one-letter code: Guanine nucleotide-binding protein subunit gamma (62 aa).

Position 59 is a cysteine methyl ester (C59). The S-geranylgeranyl cysteine moiety is linked to residue C59. Positions S60 to L62 are cleaved as a propeptide — removed in mature form.

This sequence belongs to the G protein gamma family. In terms of assembly, g proteins are composed of 3 units, alpha, beta and gamma. Interacts with gpb-1 and gpb-2.

Its subcellular location is the cell membrane. Guanine nucleotide-binding proteins (G proteins) are involved as a modulator or transducer in various transmembrane signaling systems. The beta and gamma chains are required for the GTPase activity, for replacement of GDP by GTP, and for G protein-effector interaction. The chain is Guanine nucleotide-binding protein subunit gamma (gpc-1) from Caenorhabditis briggsae.